Reading from the N-terminus, the 247-residue chain is Protein AC124 (247 aa).

The protein localises to the host cytoplasm. The protein resides in the host nucleus. Accelerates mortality in insect larvae. The sequence is that of Protein AC124 from Lepidoptera (butterflies and moths).